The chain runs to 296 residues: Ribosomal RNA small subunit methyltransferase A (296 aa).

The S-adenosyl-L-methionine site is built by Asn-30, Leu-32, Gly-57, Glu-78, Asp-103, and Asn-128.

The protein belongs to the class I-like SAM-binding methyltransferase superfamily. rRNA adenine N(6)-methyltransferase family. RsmA subfamily.

It is found in the cytoplasm. It carries out the reaction adenosine(1518)/adenosine(1519) in 16S rRNA + 4 S-adenosyl-L-methionine = N(6)-dimethyladenosine(1518)/N(6)-dimethyladenosine(1519) in 16S rRNA + 4 S-adenosyl-L-homocysteine + 4 H(+). Its function is as follows. Specifically dimethylates two adjacent adenosines (A1518 and A1519) in the loop of a conserved hairpin near the 3'-end of 16S rRNA in the 30S particle. May play a critical role in biogenesis of 30S subunits. This Staphylococcus haemolyticus (strain JCSC1435) protein is Ribosomal RNA small subunit methyltransferase A.